We begin with the raw amino-acid sequence, 446 residues long: C-type lectin domain family 18 member A (446 aa).

Positions 1-26 (MLHPETSPGRGHLLAVLLALLGTAWA) are cleaved as a signal peptide. Positions 52 to 182 (LSLHNRLRSW…AAIEAFVCAY (131 aa)) constitute an SCP domain. N-linked (GlcNAc...) asparagine glycosylation occurs at N144. Positions 228 to 261 (PRNPCRMSCQNHGRLNISTCHCHCPPGYTGRYCQ) constitute an EGF-like domain. Intrachain disulfides connect C236–C249, C251–C260, C327–C432, and C408–C424. A C-type lectin domain is found at 306 to 433 (IDGDCFMVSS…CKTRNRYICQ (128 aa)).

Post-translationally, N-glycosylated. As to expression, dectected in all cell lines tested and in peripheral blood cells.

It is found in the secreted. It localises to the endoplasmic reticulum. The protein localises to the golgi apparatus. The protein resides in the endosome. Binds polysaccharides in a Ca(2+)-independent manner with a preferentially binding to fucoidan, beta-glucans and galactans. The chain is C-type lectin domain family 18 member A (CLEC18A) from Homo sapiens (Human).